We begin with the raw amino-acid sequence, 294 residues long: Aquaporin NIP2-2 (294 aa).

The next 2 helical transmembrane spans lie at Val54 to Ile74 and Ser88 to Ala108. The NPA 1 signature appears at Asn111–Ala113. A run of 3 helical transmembrane segments spans residues Val129–Leu151, Ala169–Thr189, and Leu197–Ser217. An NPA 2 motif is present at residues Asn222–Ala224. The helical transmembrane segment at Val235 to Trp255 threads the bilayer.

This sequence belongs to the MIP/aquaporin (TC 1.A.8) family. NIP (TC 1.A.8.12) subfamily.

The protein resides in the membrane. In terms of biological role, aquaporins facilitate the transport of water and small neutral solutes across cell membranes. The polypeptide is Aquaporin NIP2-2 (NIP2-2) (Zea mays (Maize)).